A 257-amino-acid polypeptide reads, in one-letter code: Flap endonuclease Xni (257 aa).

D109 is a binding site for Mg(2+). One can recognise a 5'-3' exonuclease domain in the interval 165-254 (VKPEQLADYW…GFNLQDIRYE (90 aa)). L176, P185, I187, and I190 together coordinate K(+). Positions 189–194 (GIGPKA) are interaction with DNA.

Belongs to the Xni family. The cofactor is Mg(2+). Requires K(+) as cofactor.

Functionally, has flap endonuclease activity. During DNA replication, flap endonucleases cleave the 5'-overhanging flap structure that is generated by displacement synthesis when DNA polymerase encounters the 5'-end of a downstream Okazaki fragment. The sequence is that of Flap endonuclease Xni from Vibrio atlanticus (strain LGP32) (Vibrio splendidus (strain Mel32)).